The primary structure comprises 565 residues: Thiol:disulfide interchange protein DsbD (565 aa).

The signal sequence occupies residues 1–19 (MAQRIFTLILLLCSTSVFA). Disulfide bonds link C122–C128 and C182–C304. The next 7 helical transmembrane spans lie at 163–183 (LPFSALWALLIGIGIAFTPCV), 208–228 (LLTFIYVQGMALTYTALGLVV), 243–263 (YVLIGLAIVFTLLAMSMFGLF), 296–316 (IAGLICSPCTTAPLSAILLYI), 323–343 (WLGGGTLYLYALGMGLPLMLI), 357–377 (WMEQVKTAFGFVILALPVFLL), and 384–404 (VWGLRLWSALGVAFFGWAFIT). In terms of domain architecture, Thioredoxin spans 434–565 (WAFGATHTAQ…FSAHLRDRQP (132 aa)). A disulfide bond links C480 and C483.

This sequence belongs to the thioredoxin family. DsbD subfamily.

It is found in the cell inner membrane. It carries out the reaction [protein]-dithiol + NAD(+) = [protein]-disulfide + NADH + H(+). The catalysed reaction is [protein]-dithiol + NADP(+) = [protein]-disulfide + NADPH + H(+). Functionally, required to facilitate the formation of correct disulfide bonds in some periplasmic proteins and for the assembly of the periplasmic c-type cytochromes. Acts by transferring electrons from cytoplasmic thioredoxin to the periplasm. This transfer involves a cascade of disulfide bond formation and reduction steps. In Shigella flexneri serotype 5b (strain 8401), this protein is Thiol:disulfide interchange protein DsbD.